Consider the following 180-residue polypeptide: NAD(P)H-quinone oxidoreductase subunit I, chloroplastic (180 aa).

2 4Fe-4S ferredoxin-type domains span residues 55-84 and 95-124; these read GRIH…VDWR and LNYS…MTEE. Residues Cys-64, Cys-67, Cys-70, Cys-74, Cys-104, Cys-107, Cys-110, and Cys-114 each contribute to the [4Fe-4S] cluster site.

The protein belongs to the complex I 23 kDa subunit family. NDH is composed of at least 16 different subunits, 5 of which are encoded in the nucleus. Requires [4Fe-4S] cluster as cofactor.

Its subcellular location is the plastid. It localises to the chloroplast thylakoid membrane. The enzyme catalyses a plastoquinone + NADH + (n+1) H(+)(in) = a plastoquinol + NAD(+) + n H(+)(out). It catalyses the reaction a plastoquinone + NADPH + (n+1) H(+)(in) = a plastoquinol + NADP(+) + n H(+)(out). NDH shuttles electrons from NAD(P)H:plastoquinone, via FMN and iron-sulfur (Fe-S) centers, to quinones in the photosynthetic chain and possibly in a chloroplast respiratory chain. The immediate electron acceptor for the enzyme in this species is believed to be plastoquinone. Couples the redox reaction to proton translocation, and thus conserves the redox energy in a proton gradient. The polypeptide is NAD(P)H-quinone oxidoreductase subunit I, chloroplastic (Hordeum vulgare (Barley)).